Here is a 152-residue protein sequence, read N- to C-terminus: Coiled-coil domain-containing protein 182 (152 aa).

A coiled-coil region spans residues 46 to 109; that stretch reads ADLEILQQKV…RLREEEDRGI (64 aa).

The polypeptide is Coiled-coil domain-containing protein 182 (Ccdc182) (Mus musculus (Mouse)).